A 431-amino-acid chain; its full sequence is Glutamate-1-semialdehyde 2,1-aminomutase (431 aa).

An N6-(pyridoxal phosphate)lysine modification is found at K269.

Belongs to the class-III pyridoxal-phosphate-dependent aminotransferase family. HemL subfamily. In terms of assembly, homodimer. It depends on pyridoxal 5'-phosphate as a cofactor.

It localises to the cytoplasm. It catalyses the reaction (S)-4-amino-5-oxopentanoate = 5-aminolevulinate. It participates in porphyrin-containing compound metabolism; protoporphyrin-IX biosynthesis; 5-aminolevulinate from L-glutamyl-tRNA(Glu): step 2/2. Its pathway is porphyrin-containing compound metabolism; chlorophyll biosynthesis. In Chlorobium phaeovibrioides (strain DSM 265 / 1930) (Prosthecochloris vibrioformis (strain DSM 265)), this protein is Glutamate-1-semialdehyde 2,1-aminomutase.